Reading from the N-terminus, the 461-residue chain is mRNA cap guanine-N(7) methyltransferase (461 aa).

The interval 1–117 (MESSVKASVD…RKLQPQDALE (117 aa)) is disordered. Residues Ser-11, Ser-15, Ser-16, and Ser-58 each carry the phosphoserine modification. Composition is skewed to polar residues over residues 14-29 (ESSPGVNETAAASGQR) and 49-58 (EQNSSYVQDS). Residues 65-93 (LDVEIILDEKHSEDDGGASKRSKLERGGG) show a composition bias toward basic and acidic residues. A phosphoserine mark is found at Ser-94 and Ser-99. Residues 107 to 109 (KRK) carry the Nuclear localization signal motif. One can recognise an mRNA cap 0 methyltransferase domain in the interval 152–460 (SRIFYLRNFN…IYLVFAFEKQ (309 aa)). 161-162 (NN) contacts mRNA. Residues Lys-165, Gly-190, Asp-212, Asp-246, Gln-269, and Tyr-274 each coordinate S-adenosyl-L-methionine.

The protein belongs to the class I-like SAM-binding methyltransferase superfamily. mRNA cap 0 methyltransferase family. As to quaternary structure, interacts with importin alpha, leading to stimulate both RNA-binding and methyltransferase activity. Interaction with importin alpha and beta is required for its nuclear localization, importin beta dissociating in response to RanGTP, allowing RNMT-importin alpha to bind RNA substrates. Interacts with elongating form of polymerase II and RNGTT. Interacts with RAMAC, this interaction significantly enhances RNA-binding and cap methyltransferase activity.

Its subcellular location is the nucleus. It catalyses the reaction a 5'-end (5'-triphosphoguanosine)-ribonucleoside in mRNA + S-adenosyl-L-methionine = a 5'-end (N(7)-methyl 5'-triphosphoguanosine)-ribonucleoside in mRNA + S-adenosyl-L-homocysteine. With respect to regulation, methyltransferase activity is activated by RAMAC. Its function is as follows. Catalytic subunit of the mRNA-capping methyltransferase RNMT:RAMAC complex that methylates the N7 position of the added guanosine to the 5'-cap structure of mRNAs. Binds RNA containing 5'-terminal GpppC. The protein is mRNA cap guanine-N(7) methyltransferase (Rnmt) of Rattus norvegicus (Rat).